A 248-amino-acid chain; its full sequence is MSWSPILPFLSLLLLLFPLEVPRAATASLSQASSEGTTTCKAHDVCLLGPRPLPPSPPVRVSLYYESLCGACRYFLVRDLFPTWLMVMEIMNITLVPYGNAQERNVSGTWEFTCQHGELECRLNMVEACLLDKLEKEAAFLTIVCMEEMDDMEKKLGPCLQVYAPEVSPESIMECATGKRGTQLMHENAQLTDALHPPHEYVPWVLVNEKPLKDPSELLSIVCQLYQGTEKPDICSSIADSPRKVCYK.

The signal sequence occupies residues 1-26 (MSWSPILPFLSLLLLLFPLEVPRAAT). The propeptide at 27-54 (ASLSQASSEGTTTCKAHDVCLLGPRPLP) is removed in mature form. C69 and C72 form a disulfide bridge. 2 N-linked (GlcNAc...) asparagine glycosylation sites follow: N92 and N105. The propeptide at 231-248 (KPDICSSIADSPRKVCYK) is removed in mature form.

It belongs to the GILT family. As to quaternary structure, dimer; disulfide-linked. In terms of processing, N-glycosylated. Sugar chains contain mannose-6-phosphate. Synthesized as a 35 kDa precursor which is then processed into the mature 30 kDa form via cleavage of N-terminal and C-terminal propeptides. Processing of the precursor is mediated by multiple lysosomal proteases.

It is found in the secreted. The protein resides in the lysosome. Lysosomal thiol reductase that can reduce protein disulfide bonds. May facilitate the complete unfolding of proteins destined for lysosomal degradation. Plays an important role in antigen processing. Facilitates the generation of MHC class II-restricted epitodes from disulfide bond-containing antigen by the endocytic reduction of disulfide bonds. Also facilitates MHC class I-restricted recognition of exogenous antigens containing disulfide bonds by CD8+ T-cells or crosspresentation. The chain is Gamma-interferon-inducible lysosomal thiol reductase (Ifi30) from Mus musculus (Mouse).